The chain runs to 794 residues: Phosphoenolpyruvate synthase (794 aa).

Residue H422 is the Tele-phosphohistidine intermediate of the active site. 7 residues coordinate substrate: R512, R579, E681, G702, S703, N704, and D705. E681 is a Mg(2+) binding site. D705 provides a ligand contact to Mg(2+). Residue C752 is the Proton donor of the active site.

This sequence belongs to the PEP-utilizing enzyme family. Mg(2+) serves as cofactor.

It catalyses the reaction pyruvate + ATP + H2O = phosphoenolpyruvate + AMP + phosphate + 2 H(+). The protein operates within carbohydrate biosynthesis; gluconeogenesis. Functionally, catalyzes the phosphorylation of pyruvate to phosphoenolpyruvate. This chain is Phosphoenolpyruvate synthase (ppsA), found in Neisseria meningitidis serogroup B (strain ATCC BAA-335 / MC58).